A 286-amino-acid chain; its full sequence is UDP-3-O-acyl-N-acetylglucosamine deacetylase (286 aa).

Zn(2+) is bound by residues histidine 79, histidine 237, and aspartate 241. Residue histidine 264 is the Proton donor of the active site.

It belongs to the LpxC family. Zn(2+) is required as a cofactor.

The enzyme catalyses a UDP-3-O-[(3R)-3-hydroxyacyl]-N-acetyl-alpha-D-glucosamine + H2O = a UDP-3-O-[(3R)-3-hydroxyacyl]-alpha-D-glucosamine + acetate. Its pathway is glycolipid biosynthesis; lipid IV(A) biosynthesis; lipid IV(A) from (3R)-3-hydroxytetradecanoyl-[acyl-carrier-protein] and UDP-N-acetyl-alpha-D-glucosamine: step 2/6. In terms of biological role, catalyzes the hydrolysis of UDP-3-O-myristoyl-N-acetylglucosamine to form UDP-3-O-myristoylglucosamine and acetate, the committed step in lipid A biosynthesis. The sequence is that of UDP-3-O-acyl-N-acetylglucosamine deacetylase from Brucella abortus (strain 2308).